A 336-amino-acid chain; its full sequence is Ketol-acid reductoisomerase (NADP(+)) 1 (336 aa).

The KARI N-terminal Rossmann domain occupies 2–181 (AKVYYEKDVT…GATRAGVLET (180 aa)). NADP(+) is bound by residues 25-28 (YGSQ), arginine 48, serine 52, and 82-85 (DELQ). Histidine 107 is an active-site residue. Glycine 133 is an NADP(+) binding site. Residues 182-327 (TFKEETETDL…RKLRGMMPFV (146 aa)) enclose the KARI C-terminal knotted domain. Residues aspartate 190, glutamate 194, glutamate 226, and glutamate 230 each contribute to the Mg(2+) site. Serine 251 contributes to the substrate binding site.

It belongs to the ketol-acid reductoisomerase family. Mg(2+) serves as cofactor.

The enzyme catalyses (2R)-2,3-dihydroxy-3-methylbutanoate + NADP(+) = (2S)-2-acetolactate + NADPH + H(+). The catalysed reaction is (2R,3R)-2,3-dihydroxy-3-methylpentanoate + NADP(+) = (S)-2-ethyl-2-hydroxy-3-oxobutanoate + NADPH + H(+). The protein operates within amino-acid biosynthesis; L-isoleucine biosynthesis; L-isoleucine from 2-oxobutanoate: step 2/4. Its pathway is amino-acid biosynthesis; L-valine biosynthesis; L-valine from pyruvate: step 2/4. Involved in the biosynthesis of branched-chain amino acids (BCAA). Catalyzes an alkyl-migration followed by a ketol-acid reduction of (S)-2-acetolactate (S2AL) to yield (R)-2,3-dihydroxy-isovalerate. In the isomerase reaction, S2AL is rearranged via a Mg-dependent methyl migration to produce 3-hydroxy-3-methyl-2-ketobutyrate (HMKB). In the reductase reaction, this 2-ketoacid undergoes a metal-dependent reduction by NADPH to yield (R)-2,3-dihydroxy-isovalerate. The sequence is that of Ketol-acid reductoisomerase (NADP(+)) 1 from Bacillus anthracis.